A 1368-amino-acid chain; its full sequence is Mediator of RNA polymerase II transcription subunit 23 (1368 aa).

The segment at 1343-1368 (VPPQAMNSGSPAPQSNQVPVSLPVTQ) is disordered. Positions 1347 to 1368 (AMNSGSPAPQSNQVPVSLPVTQ) are enriched in polar residues.

The protein belongs to the Mediator complex subunit 23 family. In terms of assembly, interacts with ELK1. Component of the Mediator complex, which is composed of MED1, MED4, MED6, MED7, MED8, MED9, MED10, MED11, MED12, MED13, MED13L, MED14, MED15, MED16, MED17, MED18, MED19, MED20, MED21, MED22, MED23, MED24, MED25, MED26, MED27, MED29, MED30, MED31, CCNC, CDK8 and CDC2L6/CDK11. The MED12, MED13, CCNC and CDK8 subunits form a distinct module termed the CDK8 module. Mediator containing the CDK8 module is less active than Mediator lacking this module in supporting transcriptional activation. Individual preparations of the Mediator complex lacking one or more distinct subunits have been variously termed ARC, CRSP, DRIP, PC2, SMCC and TRAP. Interacts with CEBPB (when not methylated), CTNNB1, and GLI3. Interacts with the adenovirus E1A protein.

The protein resides in the nucleus. Functionally, required for transcriptional activation subsequent to the assembly of the pre-initiation complex. Component of the Mediator complex, a coactivator involved in the regulated transcription of nearly all RNA polymerase II-dependent genes. Mediator functions as a bridge to convey information from gene-specific regulatory proteins to the basal RNA polymerase II transcription machinery. Mediator is recruited to promoters by direct interactions with regulatory proteins and serves as a scaffold for the assembly of a functional pre-initiation complex with RNA polymerase II and the general transcription factors. Required for transcriptional activation by adenovirus E1A protein. Required for ELK1-dependent transcriptional activation in response to activated Ras signaling. This Homo sapiens (Human) protein is Mediator of RNA polymerase II transcription subunit 23 (MED23).